The primary structure comprises 300 residues: Acetylglutamate kinase (300 aa).

Substrate contacts are provided by residues 73-74, Arg95, and Asn197; that span reads GG.

It belongs to the acetylglutamate kinase family. ArgB subfamily.

It localises to the cytoplasm. The catalysed reaction is N-acetyl-L-glutamate + ATP = N-acetyl-L-glutamyl 5-phosphate + ADP. It functions in the pathway amino-acid biosynthesis; L-arginine biosynthesis; N(2)-acetyl-L-ornithine from L-glutamate: step 2/4. In terms of biological role, catalyzes the ATP-dependent phosphorylation of N-acetyl-L-glutamate. The protein is Acetylglutamate kinase of Bordetella petrii (strain ATCC BAA-461 / DSM 12804 / CCUG 43448).